The sequence spans 200 residues: GTP-binding protein rho2 (200 aa).

Position 15–22 (15–22 (GDGACGKT)) interacts with GTP. Positions 37–45 (YVPTVFENY) match the Effector region motif. GTP contacts are provided by residues 62–66 (DTAGQ) and 120–123 (MKAD). Cys197 carries the cysteine methyl ester modification. A lipid anchor (S-geranylgeranyl cysteine) is attached at Cys197. Residues 198–200 (IIS) constitute a propeptide, removed in mature form.

The protein belongs to the small GTPase superfamily. Rho family. Interacts with pck2.

It is found in the cell membrane. In terms of biological role, involved in cell morphogenesis, the maintenance of growth direction, control of polarity and of cell wall integrity. Regulates the synthesis of alpha-D-glucan through activation of pck2. The polypeptide is GTP-binding protein rho2 (rho2) (Schizosaccharomyces pombe (strain 972 / ATCC 24843) (Fission yeast)).